The chain runs to 209 residues: Ribosomal RNA large subunit methyltransferase E (209 aa).

S-adenosyl-L-methionine contacts are provided by Gly63, Trp65, Asp83, Asp99, and Asp124. Lys164 functions as the Proton acceptor in the catalytic mechanism. Positions 191 to 209 (EASRGRSREVYIVATGYKG) constitute a TRAM domain.

The protein belongs to the class I-like SAM-binding methyltransferase superfamily. RNA methyltransferase RlmE family.

Its subcellular location is the cytoplasm. The catalysed reaction is uridine(2552) in 23S rRNA + S-adenosyl-L-methionine = 2'-O-methyluridine(2552) in 23S rRNA + S-adenosyl-L-homocysteine + H(+). Specifically methylates the uridine in position 2552 of 23S rRNA at the 2'-O position of the ribose in the fully assembled 50S ribosomal subunit. The chain is Ribosomal RNA large subunit methyltransferase E from Haemophilus influenzae (strain ATCC 51907 / DSM 11121 / KW20 / Rd).